A 392-amino-acid chain; its full sequence is Putative purine permease 19 (392 aa).

Positions 1–16 (MGFHTKSPDRVTHEEE) are enriched in basic and acidic residues. The interval 1–29 (MGFHTKSPDRVTHEEEANIGVDNQPRETT) is disordered. Ser30 is subject to Phosphoserine. 10 helical membrane passes run 46–66 (ICIFVCSCLVVAGRVLSTLLL), 88–108 (WLQSMVQNAAFPFTAFLLLLW), 128–148 (LFLLYISLGVLFAAYSQLYAI), 154–174 (VFFLWIFTSQLIFTSIFTTII), 182–202 (WIILSMVLSGAATGLGITSSG), 220–240 (WCAFFGTVAFSLSLCIMQLGF), 254–274 (VILMQTNASMIATLICLVGLF), 300–320 (LIGLSLAWQVMSLGLVGLVCL), 325–345 (FSNVVSFCSTPLVNILLVLAF), and 354–374 (FFKEGALVAGILGFASYVYSL).

This sequence belongs to the purine permeases (TC 2.A.7.14) family.

Its subcellular location is the membrane. The protein is Putative purine permease 19 (PUP19) of Arabidopsis thaliana (Mouse-ear cress).